Here is a 201-residue protein sequence, read N- to C-terminus: Cell division protein SepF (201 aa).

Over residues 27 to 38 (VQERTSVQRDSR) the composition is skewed to basic and acidic residues. Residues 27–99 (VQERTSVQRD…PRIQNKDSVR (73 aa)) are disordered. 2 stretches are compositionally biased toward polar residues: residues 43–54 (QEASQRSHMTNS) and 82–92 (DNSYQQATPRI).

This sequence belongs to the SepF family. In terms of assembly, homodimer. Interacts with FtsZ.

The protein resides in the cytoplasm. Cell division protein that is part of the divisome complex and is recruited early to the Z-ring. Probably stimulates Z-ring formation, perhaps through the cross-linking of FtsZ protofilaments. Its function overlaps with FtsA. The sequence is that of Cell division protein SepF from Streptococcus agalactiae serotype III (strain NEM316).